The chain runs to 92 residues: Large ribosomal subunit protein eL31 (92 aa).

It belongs to the eukaryotic ribosomal protein eL31 family.

The polypeptide is Large ribosomal subunit protein eL31 (Haloquadratum walsbyi (strain DSM 16790 / HBSQ001)).